A 162-amino-acid chain; its full sequence is Large ribosomal subunit protein uL10 (162 aa).

It belongs to the universal ribosomal protein uL10 family. Part of the ribosomal stalk of the 50S ribosomal subunit. The N-terminus interacts with L11 and the large rRNA to form the base of the stalk. The C-terminus forms an elongated spine to which L12 dimers bind in a sequential fashion forming a multimeric L10(L12)X complex.

Forms part of the ribosomal stalk, playing a central role in the interaction of the ribosome with GTP-bound translation factors. The polypeptide is Large ribosomal subunit protein uL10 (Vibrio vulnificus (strain CMCP6)).